Reading from the N-terminus, the 103-residue chain is Large ribosomal subunit protein uL24 (103 aa).

The protein belongs to the universal ribosomal protein uL24 family. As to quaternary structure, part of the 50S ribosomal subunit.

One of two assembly initiator proteins, it binds directly to the 5'-end of the 23S rRNA, where it nucleates assembly of the 50S subunit. In terms of biological role, one of the proteins that surrounds the polypeptide exit tunnel on the outside of the subunit. The polypeptide is Large ribosomal subunit protein uL24 (Geobacillus sp. (strain WCH70)).